Here is a 241-residue protein sequence, read N- to C-terminus: Phosphoribosylaminoimidazole-succinocarboxamide synthase (241 aa).

The protein belongs to the SAICAR synthetase family.

It carries out the reaction 5-amino-1-(5-phospho-D-ribosyl)imidazole-4-carboxylate + L-aspartate + ATP = (2S)-2-[5-amino-1-(5-phospho-beta-D-ribosyl)imidazole-4-carboxamido]succinate + ADP + phosphate + 2 H(+). The protein operates within purine metabolism; IMP biosynthesis via de novo pathway; 5-amino-1-(5-phospho-D-ribosyl)imidazole-4-carboxamide from 5-amino-1-(5-phospho-D-ribosyl)imidazole-4-carboxylate: step 1/2. The polypeptide is Phosphoribosylaminoimidazole-succinocarboxamide synthase (Latilactobacillus sakei subsp. sakei (strain 23K) (Lactobacillus sakei subsp. sakei)).